We begin with the raw amino-acid sequence, 152 residues long: Plant UBX domain-containing protein 12 (152 aa).

Positions 32-61 (KRFSEEESEETENTTNSSNAVFGFPNLPEE) are disordered. The region spanning 67-150 (DQSVLCRICV…GLANSLVSVT (84 aa)) is the UBX domain.

In Arabidopsis thaliana (Mouse-ear cress), this protein is Plant UBX domain-containing protein 12.